The chain runs to 418 residues: Gamma-glutamyl phosphate reductase (418 aa).

The protein belongs to the gamma-glutamyl phosphate reductase family.

The protein localises to the cytoplasm. The enzyme catalyses L-glutamate 5-semialdehyde + phosphate + NADP(+) = L-glutamyl 5-phosphate + NADPH + H(+). It participates in amino-acid biosynthesis; L-proline biosynthesis; L-glutamate 5-semialdehyde from L-glutamate: step 2/2. Functionally, catalyzes the NADPH-dependent reduction of L-glutamate 5-phosphate into L-glutamate 5-semialdehyde and phosphate. The product spontaneously undergoes cyclization to form 1-pyrroline-5-carboxylate. In Desulfotalea psychrophila (strain LSv54 / DSM 12343), this protein is Gamma-glutamyl phosphate reductase.